A 358-amino-acid chain; its full sequence is Protein-glutamate methylesterase/protein-glutamine glutaminase 2 (358 aa).

Residues 7-124 (SVLLVDDSAV…KNFLIESAAE (118 aa)) form the Response regulatory domain. At Asp-58 the chain carries 4-aspartylphosphate. The region spanning 170–358 (AQTTERIVAI…QEIHQAILHR (189 aa)) is the CheB-type methylesterase domain. Catalysis depends on residues Ser-182, His-208, and Asp-304.

The protein belongs to the CheB family. Post-translationally, phosphorylated by CheA. Phosphorylation of the N-terminal regulatory domain activates the methylesterase activity.

The protein resides in the cytoplasm. It catalyses the reaction [protein]-L-glutamate 5-O-methyl ester + H2O = L-glutamyl-[protein] + methanol + H(+). It carries out the reaction L-glutaminyl-[protein] + H2O = L-glutamyl-[protein] + NH4(+). In terms of biological role, involved in chemotaxis. Part of a chemotaxis signal transduction system that modulates chemotaxis in response to various stimuli. Catalyzes the demethylation of specific methylglutamate residues introduced into the chemoreceptors (methyl-accepting chemotaxis proteins or MCP) by CheR. Also mediates the irreversible deamidation of specific glutamine residues to glutamic acid. The polypeptide is Protein-glutamate methylesterase/protein-glutamine glutaminase 2 (Pseudomonas syringae pv. tomato (strain ATCC BAA-871 / DC3000)).